Here is a 497-residue protein sequence, read N- to C-terminus: Cysteine-rich secretory protein LCCL domain-containing 2 (497 aa).

Positions 1–22 (MSCVLGGVIPLGLLFLVCGSQG) are cleaved as a signal peptide. N-linked (GlcNAc...) asparagine glycosylation is present at Asn27. Residues 62-200 (LHNKLRGQVQ…ENAVYFVCNY (139 aa)) form the SCP domain. 2 consecutive LCCL domains span residues 284-379 (MTQV…SSSF) and 385-488 (KVQD…RDGK). 4 cysteine pairs are disulfide-bonded: Cys290-Cys308, Cys312-Cys332, Cys391-Cys413, and Cys417-Cys440.

This sequence belongs to the CRISP family. Binds to heparin, dermatan sulfate and chondroitin sulfate.

It localises to the secreted. Promotes matrix assembly. This Homo sapiens (Human) protein is Cysteine-rich secretory protein LCCL domain-containing 2 (CRISPLD2).